A 338-amino-acid polypeptide reads, in one-letter code: Phenylalanine--tRNA ligase alpha subunit (338 aa).

A Mg(2+)-binding site is contributed by Glu253.

This sequence belongs to the class-II aminoacyl-tRNA synthetase family. Phe-tRNA synthetase alpha subunit type 1 subfamily. In terms of assembly, tetramer of two alpha and two beta subunits. It depends on Mg(2+) as a cofactor.

The protein resides in the cytoplasm. It catalyses the reaction tRNA(Phe) + L-phenylalanine + ATP = L-phenylalanyl-tRNA(Phe) + AMP + diphosphate + H(+). In Syntrophotalea carbinolica (strain DSM 2380 / NBRC 103641 / GraBd1) (Pelobacter carbinolicus), this protein is Phenylalanine--tRNA ligase alpha subunit.